The sequence spans 932 residues: Serine/threonine-protein kinase PknD (932 aa).

Positions 4–291 (YDIVRIIGKG…ELKEDIESHL (288 aa)) constitute a Protein kinase domain. ATP contacts are provided by residues 10–18 (IGKGGMGEV) and Lys-33. Asp-138 acts as the Proton acceptor in catalysis.

Belongs to the protein kinase superfamily. Ser/Thr protein kinase family. In terms of processing, autophosphorylated on serine and threonine residues.

The enzyme catalyses L-seryl-[protein] + ATP = O-phospho-L-seryl-[protein] + ADP + H(+). The catalysed reaction is L-threonyl-[protein] + ATP = O-phospho-L-threonyl-[protein] + ADP + H(+). In terms of biological role, together with the serine/threonine kinase Pkn1, may play a role in the specific interactions with host proteins during intracellular growth. In Chlamydia pneumoniae (Chlamydophila pneumoniae), this protein is Serine/threonine-protein kinase PknD.